A 637-amino-acid polypeptide reads, in one-letter code: Chaperone protein HtpG (637 aa).

Residues 1–330 (MATAPASHAF…TEDLPLNISR (330 aa)) are a; substrate-binding. The b stretch occupies residues 331 to 551 (ETLQENVVVR…GGASTSSMDR (221 aa)). Residues 552 to 637 (LLRVLHKDES…GDWYKAVRGL (86 aa)) are c.

It belongs to the heat shock protein 90 family. Homodimer.

The protein resides in the cytoplasm. Its function is as follows. Molecular chaperone. Has ATPase activity. The protein is Chaperone protein HtpG of Nitratidesulfovibrio vulgaris (strain ATCC 29579 / DSM 644 / CCUG 34227 / NCIMB 8303 / VKM B-1760 / Hildenborough) (Desulfovibrio vulgaris).